Reading from the N-terminus, the 131-residue chain is Small ribosomal subunit protein uS11 (131 aa).

This sequence belongs to the universal ribosomal protein uS11 family. As to quaternary structure, part of the 30S ribosomal subunit. Interacts with proteins S7 and S18. Binds to IF-3.

In terms of biological role, located on the platform of the 30S subunit, it bridges several disparate RNA helices of the 16S rRNA. Forms part of the Shine-Dalgarno cleft in the 70S ribosome. This chain is Small ribosomal subunit protein uS11, found in Syntrophotalea carbinolica (strain DSM 2380 / NBRC 103641 / GraBd1) (Pelobacter carbinolicus).